A 145-amino-acid chain; its full sequence is Fluoride-specific ion channel FluC 2 (145 aa).

Helical transmembrane passes span 16 to 36 (MLLVFVGGALGTAARALLSAA), 42 to 62 (VISVITFVINVIGAFVLGWLL), 80 to 100 (LFAGTGVLGGFTTYSAFAVDT), and 113 to 133 (ILYAAATIAIGAAAYLAGIAL). 2 residues coordinate Na(+): glycine 88 and threonine 91.

This sequence belongs to the fluoride channel Fluc/FEX (TC 1.A.43) family.

The protein resides in the cell membrane. The catalysed reaction is fluoride(in) = fluoride(out). Its activity is regulated as follows. Na(+) is not transported, but it plays an essential structural role and its presence is essential for fluoride channel function. Functionally, fluoride-specific ion channel. Important for reducing fluoride concentration in the cell, thus reducing its toxicity. In Leifsonia xyli subsp. xyli (strain CTCB07), this protein is Fluoride-specific ion channel FluC 2.